Reading from the N-terminus, the 467-residue chain is Argininosuccinate lyase (467 aa).

The protein belongs to the lyase 1 family. Argininosuccinate lyase subfamily.

The protein localises to the cytoplasm. It catalyses the reaction 2-(N(omega)-L-arginino)succinate = fumarate + L-arginine. It participates in amino-acid biosynthesis; L-arginine biosynthesis; L-arginine from L-ornithine and carbamoyl phosphate: step 3/3. This Sinorhizobium fredii (strain NBRC 101917 / NGR234) protein is Argininosuccinate lyase.